Reading from the N-terminus, the 168-residue chain is Putative ankyrin repeat protein RBE_1411 (168 aa).

3 ANK repeats span residues threonine 59–lysine 88, tyrosine 98–isoleucine 127, and lysine 131–asparagine 160.

The sequence is that of Putative ankyrin repeat protein RBE_1411 from Rickettsia bellii (strain RML369-C).